The following is an 859-amino-acid chain: Photoactivated adenylate cyclase subunit beta-like protein FB (859 aa).

The BLUF 1 domain occupies 56–149; the sequence is LRRLMYLSKS…GRMYGDWHMK (94 aa). One can recognise a Guanylate cyclase 1 domain in the interval 205–333; that stretch reads VVTFIYLVEF…DCINTTSRIA (129 aa). The interval 414 to 449 is disordered; it reads GLPNSQRPPIFDDTPKANRRPRTPGYGGRQRSDSQV. One can recognise a BLUF 2 domain in the interval 471 to 563; that stretch reads LTTLTYISQA…RVYPSEWTLT (93 aa). One can recognise a Guanylate cyclase 2 domain in the interval 619 to 748; sequence VMLATDICSF…AVSARVMEVE (130 aa). Residues 813 to 859 form a disordered region; sequence AARSGEKPLTEPEAAKPDFRVSPGRVRHGDSGRRSNSAQGKRSIQVR. Basic and acidic residues predominate over residues 815–831; the sequence is RSGEKPLTEPEAAKPDF. The span at 846-859 shows a compositional bias: polar residues; it reads RSNSAQGKRSIQVR.

It belongs to the adenylyl cyclase class-4/guanylyl cyclase family. Heterotetramer of two alpha and two beta subunits.

The protein resides in the cell projection. It is found in the cilium. It localises to the flagellum. The chain is Photoactivated adenylate cyclase subunit beta-like protein FB from Euglena gracilis.